Reading from the N-terminus, the 351-residue chain is UPF0421 protein BC_2748 (351 aa).

4 helical membrane-spanning segments follow: residues 19–39 (IAVF…IFAV), 74–94 (FTFF…FTIV), 109–129 (TLTA…AFLI), and 131–151 (LATT…IFPP).

The protein belongs to the UPF0421 family.

It is found in the cell membrane. The sequence is that of UPF0421 protein BC_2748 from Bacillus cereus (strain ATCC 14579 / DSM 31 / CCUG 7414 / JCM 2152 / NBRC 15305 / NCIMB 9373 / NCTC 2599 / NRRL B-3711).